The sequence spans 915 residues: Bifunctional uridylyltransferase/uridylyl-removing enzyme (915 aa).

The segment at 1-360 (MFNCAVTAID…PDEERPKKQP (360 aa)) is uridylyltransferase. A uridylyl-removing region spans residues 361 to 731 (INARFNQVGE…EHRELALDAV (371 aa)). An HD domain is found at 478 to 594 (VDAHTLFLIR…TLFADLVGNV (117 aa)). ACT domains follow at residues 732–817 (QVFV…RIPR) and 840–915 (IMSL…NDSI).

The protein belongs to the GlnD family. It depends on Mg(2+) as a cofactor.

It carries out the reaction [protein-PII]-L-tyrosine + UTP = [protein-PII]-uridylyl-L-tyrosine + diphosphate. It catalyses the reaction [protein-PII]-uridylyl-L-tyrosine + H2O = [protein-PII]-L-tyrosine + UMP + H(+). With respect to regulation, uridylyltransferase (UTase) activity is inhibited by glutamine, while glutamine activates uridylyl-removing (UR) activity. In terms of biological role, modifies, by uridylylation and deuridylylation, the PII regulatory proteins (GlnB and homologs), in response to the nitrogen status of the cell that GlnD senses through the glutamine level. Under low glutamine levels, catalyzes the conversion of the PII proteins and UTP to PII-UMP and PPi, while under higher glutamine levels, GlnD hydrolyzes PII-UMP to PII and UMP (deuridylylation). Thus, controls uridylylation state and activity of the PII proteins, and plays an important role in the regulation of nitrogen assimilation and metabolism. In Psychrobacter arcticus (strain DSM 17307 / VKM B-2377 / 273-4), this protein is Bifunctional uridylyltransferase/uridylyl-removing enzyme.